Here is a 79-residue protein sequence, read N- to C-terminus: Conotoxin MIVA (79 aa).

An N-terminal signal peptide occupies residues 1 to 21 (MGMRMMFTVFLLVVLATTVVS). Positions 22–38 (IPSDRASDGRNAVVHER) are excised as a propeptide. Residue P40 is modified to 4-hydroxyproline. E41 carries the post-translational modification 4-carboxyglutamate. Residues T45 and T47 are each glycosylated (O-linked (HexNAc...) threonine). 6 positions are modified to 4-hydroxyproline: P55, P60, P61, P69, P70, and P74. P74 is modified (proline amide). A propeptide spanning residues 75–79 (GRRND) is cleaved from the precursor.

In terms of processing, O-linked glycan consists of Hex4-HexNAc2 hexasaccharide. Contains 3 disulfide bonds. In terms of tissue distribution, expressed by the venom duct.

The protein localises to the secreted. Its function is as follows. Probable neurotoxin with ion channel inhibitor activity. This Conus magus (Magical cone) protein is Conotoxin MIVA.